Consider the following 232-residue polypeptide: UPF0758 protein Amet_2289 (232 aa).

One can recognise an MPN domain in the interval 110–232 (RIKSPDDVSN…YYSLKEKSMM (123 aa)). Residues His-181, His-183, and Asp-194 each contribute to the Zn(2+) site. A JAMM motif motif is present at residues 181-194 (HNHPSGDPSPSGED).

This sequence belongs to the UPF0758 family.

This is UPF0758 protein Amet_2289 from Alkaliphilus metalliredigens (strain QYMF).